The chain runs to 142 residues: Large ribosomal subunit protein uL11 (142 aa).

The protein belongs to the universal ribosomal protein uL11 family. As to quaternary structure, part of the ribosomal stalk of the 50S ribosomal subunit. Interacts with L10 and the large rRNA to form the base of the stalk. L10 forms an elongated spine to which L12 dimers bind in a sequential fashion forming a multimeric L10(L12)X complex. Post-translationally, one or more lysine residues are methylated.

Forms part of the ribosomal stalk which helps the ribosome interact with GTP-bound translation factors. In Dictyoglomus turgidum (strain DSM 6724 / Z-1310), this protein is Large ribosomal subunit protein uL11.